Consider the following 476-residue polypeptide: Ribulose bisphosphate carboxylase large chain (476 aa).

A propeptide spanning residues 1-2 (MS) is cleaved from the precursor. N-acetylproline is present on Pro3. Lys14 is subject to N6,N6,N6-trimethyllysine. 2 residues coordinate substrate: Asn123 and Thr173. Lys175 (proton acceptor) is an active-site residue. Lys177 serves as a coordination point for substrate. The Mg(2+) site is built by Lys201, Asp203, and Glu204. Residue Lys201 is modified to N6-carboxylysine. Catalysis depends on His294, which acts as the Proton acceptor. Residues Arg295, His327, and Ser379 each contribute to the substrate site.

The protein belongs to the RuBisCO large chain family. Type I subfamily. In terms of assembly, heterohexadecamer of 8 large chains and 8 small chains; disulfide-linked. The disulfide link is formed within the large subunit homodimers. Mg(2+) serves as cofactor. In terms of processing, the disulfide bond which can form in the large chain dimeric partners within the hexadecamer appears to be associated with oxidative stress and protein turnover.

It is found in the plastid. It localises to the chloroplast. The enzyme catalyses 2 (2R)-3-phosphoglycerate + 2 H(+) = D-ribulose 1,5-bisphosphate + CO2 + H2O. It catalyses the reaction D-ribulose 1,5-bisphosphate + O2 = 2-phosphoglycolate + (2R)-3-phosphoglycerate + 2 H(+). RuBisCO catalyzes two reactions: the carboxylation of D-ribulose 1,5-bisphosphate, the primary event in carbon dioxide fixation, as well as the oxidative fragmentation of the pentose substrate in the photorespiration process. Both reactions occur simultaneously and in competition at the same active site. The polypeptide is Ribulose bisphosphate carboxylase large chain (Brachypodium distachyon (Purple false brome)).